A 718-amino-acid chain; its full sequence is Pullulanase (718 aa).

D406 functions as the Nucleophile in the catalytic mechanism. E435 serves as the catalytic Proton donor.

Belongs to the glycosyl hydrolase 13 family.

The enzyme catalyses Hydrolysis of (1-&gt;6)-alpha-D-glucosidic linkages in pullulan, amylopectin and glycogen, and in the alpha- and beta-limit dextrins of amylopectin and glycogen.. The protein is Pullulanase (amyX) of Bacillus subtilis (strain 168).